The primary structure comprises 409 residues: Peptidase T (409 aa).

Histidine 78 is a binding site for Zn(2+). The active site involves aspartate 80. Aspartate 140 contacts Zn(2+). The active-site Proton acceptor is glutamate 173. Zn(2+) contacts are provided by glutamate 174, aspartate 196, and histidine 379.

The protein belongs to the peptidase M20B family. Zn(2+) is required as a cofactor.

The protein resides in the cytoplasm. It catalyses the reaction Release of the N-terminal residue from a tripeptide.. In terms of biological role, cleaves the N-terminal amino acid of tripeptides. The sequence is that of Peptidase T from Serratia proteamaculans (strain 568).